The chain runs to 930 residues: Wings apart-like protein 1 (930 aa).

The interval 540–566 is disordered; sequence FSPTSMSGSQSSVSGNEPTTSKTRVGS. Residues 541-553 show a composition bias toward low complexity; sequence SPTSMSGSQSSVS. Residues 554 to 566 show a composition bias toward polar residues; that stretch reads GNEPTTSKTRVGS. Residues 854–909 enclose the WAPL domain; that stretch reads KEAEKMIVEAYSALLLAFLSTESRSIRNSIKDYLPKRNLAILVPVLERFVAFHMTL.

This sequence belongs to the WAPL family. In terms of assembly, interacts with the cohesin complex throughout the cell cycle. In terms of tissue distribution, expressed in roots, leaves, buds and siliques.

The protein resides in the nucleus. It localises to the chromosome. In terms of biological role, regulator of sister chromatid cohesion in meiosis which negatively regulates cohesin association with chromatin, acting as an antagonist of CTF7. Cohesion ensures that chromosome partitioning is accurate in both meiotic and mitotic cells and plays an important role in DNA repair. Essential for the prophase removal of cohesin during meiosis thus determining the timely release of meiotic cohesion. Important for proper spindle attachment and assembly during meiosis. Helps to prevent abnormal centromere association during prophase I in meiocytes. Required for early embryonic patterning. Also involved in chromosome segregation during mitosis. This Arabidopsis thaliana (Mouse-ear cress) protein is Wings apart-like protein 1.